A 1421-amino-acid polypeptide reads, in one-letter code: Envelopment polyprotein (1421 aa).

An N-terminal signal peptide occupies residues 1–20; it reads MEGSYWWLSLLALLAWGANG. Topologically, residues 21–479 are lumenal; that stretch reads ESTSPAETSP…CRMSHRPRTC (459 aa). The segment covering 22–31 has biased composition (low complexity); that stretch reads STSPAETSPA. The interval 22 to 42 is disordered; that stretch reads STSPAETSPAPTTPNPPVVNP. N-linked (GlcNAc...) asparagine; by host glycans are attached at residues N97 and N346. Residues 480 to 500 form a helical membrane-spanning segment; sequence LALFIWLGAGYGITCIAGYMV. The Cytoplasmic portion of the chain corresponds to 501 to 610; sequence YYAILALSML…KLGTLLKRLS (110 aa). A helical membrane pass occupies residues 611 to 631; it reads WVTVFLCLFLTAIAPVQGQVT. At 632–643 the chain is on the lumenal side; the sequence is TSPVLPSNQSTE. N639 carries N-linked (GlcNAc...) asparagine; by host glycosylation. A helical transmembrane segment spans residues 644–664; that stretch reads CTLLPPPVFLIFSAVLMSKTL. Over 665–708 the chain is Cytoplasmic; that stretch reads KRMGPVNKVGAAGHSARRTNSPKNLYKSKQIANTKSGPREPRRR. The helical transmembrane segment at 709–729 threads the bilayer; that stretch reads VVVKALLILTASSALQSIHLA. Residues 722–776 constitute a propeptide that is removed on maturation; that stretch reads ALQSIHLAQAFDSGSLPEGAWEEEMQLVQGCNQECSLEEDECSCPDGQSMTRKLL. Residues 730–1330 are Lumenal-facing; that stretch reads QAFDSGSLPE…GSFFRNYLGS (601 aa). 2 disulfides stabilise this stretch: C901-C1096 and C929-C934. Residues N1081 and N1299 are each glycosylated (N-linked (GlcNAc...) asparagine; by host). Residues 1331–1351 form a helical membrane-spanning segment; sequence ITLGIVLTLLPVAVVLLFFCY. The Cytoplasmic segment spans residues 1352-1421; it reads GDKLFKLCSC…GKGKNYKELV (70 aa).

This sequence belongs to the nairovirus envelope glycoprotein family. Heterodimer with glycoprotein C; in prefusion state. As to quaternary structure, heterodimer with glycoprotein N; in prefusion state. Homotrimeric; in postfusion state. Specific enzymatic cleavage by host MBTPS1/S1P/SKI-1 endopeptidase yield glycoprotein N. Specific enzymatic cleavages by host furin-like protease and MBTPS1/S1P endopeptidase yield GP38. In terms of processing, glycosylated.

It is found in the host endoplasmic reticulum membrane. Its subcellular location is the virion membrane. It localises to the host Golgi apparatus membrane. Functionally, glycoprotein N and glycoprotein C interact with each other and are present at the surface of the virion. Glycoprotein N probably locks the Gn-Gc complex in a prefusion state. Glycoprotein N and glycoprotein C are able to attach the virion to host cell receptors. This attachment induces virion internalization predominantly through clathrin-dependent endocytosis. Its function is as follows. Glycoprotein C and glycoprotein N interact with each other and are present at the surface of the virion. The spikes at the surface of the virion are formed by an N-terminal extension of glycoprotein C. Glycoprotein N and glycoprotein C are able to attach the virion to host cell receptors. This attachment induces virion internalization predominantly through clathrin-dependent endocytosis. Class II fusion protein that promotes fusion of viral membrane with host endosomal membrane after endocytosis of the virion. Exposure to potassium is necessary for the conformational change leading to fusion. The chain is Envelopment polyprotein (GP) from Ixodes.